A 68-amino-acid chain; its full sequence is uncharacterized protein (68 aa).

This is an uncharacterized protein from Feline immunodeficiency virus (strain San Diego) (FIV).